The primary structure comprises 140 residues: Hexon-interlacing protein (140 aa).

Residues 100 to 127 (LTALLAQLDSLTRELNVVSQQLLDLRQQ) adopt a coiled-coil conformation.

Belongs to the adenoviridae hexon-interlacing protein family. Homotrimer. Interacts with hexon protein; this interaction tethers the hexons together. Self-interacts with adjacent proteins. Interacts with kinesin light chain KLC1; this interaction leads to capsid disruption at the nuclear pore complex during virus entry into host cell.

It is found in the virion. It localises to the host nucleus. Structural component of the virion that acts as a cement protein on the capsid exterior and forms triskelion structures consisting of three molecules that stabilize three hexon trimers at the center of each icosahedral facet and fixes the peripentonal hexons. Dispensable for assembly. During virus entry, recruits the anterograde motor kinesin-1 to the capsid docked at the nuclear pore complex thereby subjecting the docked capsid to a pulling force. The resulting tension leads to capsid disruption, dispersion of capsid fragments toward cell periphery and eventually viral DNA entry into the host nucleus. The protein is Hexon-interlacing protein of Human adenovirus C serotype 5 (HAdV-5).